The following is a 399-amino-acid chain: Argininosuccinate synthase (399 aa).

8–16 (AYSGGLDTS) contributes to the ATP binding site. Tyr87 is an L-citrulline binding site. An ATP-binding site is contributed by Gly117. Positions 119, 123, and 124 each coordinate L-aspartate. Asn123 contacts L-citrulline. Positions 127, 175, 259, and 271 each coordinate L-citrulline.

Belongs to the argininosuccinate synthase family. Type 1 subfamily. Homotetramer.

The protein localises to the cytoplasm. The enzyme catalyses L-citrulline + L-aspartate + ATP = 2-(N(omega)-L-arginino)succinate + AMP + diphosphate + H(+). Its pathway is amino-acid biosynthesis; L-arginine biosynthesis; L-arginine from L-ornithine and carbamoyl phosphate: step 2/3. The chain is Argininosuccinate synthase from Corynebacterium diphtheriae (strain ATCC 700971 / NCTC 13129 / Biotype gravis).